A 325-amino-acid polypeptide reads, in one-letter code: tRNA (guanine-N(7)-)-methyltransferase (325 aa).

Residues 1–101 (MSEATDKQKQ…LEYPKSPESM (101 aa)) are disordered. Residues 51–69 (VSTTPEPEQSDSSATTATI) show a composition bias toward polar residues. S-adenosyl-L-methionine is bound by residues Gly122, 145-146 (EI), 199-200 (NA), and Cys219. Residue Asp222 is part of the active site. 297–299 (TEE) is an S-adenosyl-L-methionine binding site.

This sequence belongs to the class I-like SAM-binding methyltransferase superfamily. TrmB family. In terms of assembly, forms a complex with TRM82.

Its subcellular location is the nucleus. It carries out the reaction guanosine(46) in tRNA + S-adenosyl-L-methionine = N(7)-methylguanosine(46) in tRNA + S-adenosyl-L-homocysteine. The protein operates within tRNA modification; N(7)-methylguanine-tRNA biosynthesis. Its function is as follows. Catalyzes the formation of N(7)-methylguanine at position 46 (m7G46) in tRNA. The sequence is that of tRNA (guanine-N(7)-)-methyltransferase from Candida albicans (strain SC5314 / ATCC MYA-2876) (Yeast).